The chain runs to 468 residues: Ubiquitin carboxyl-terminal hydrolase MINDY-1 (468 aa).

The span at 1–19 (MEQPQTENPAPSKATSAET) shows a compositional bias: polar residues. The segment at 1–105 (MEQPQTENPA…RPQELPQSPR (105 aa)) is disordered. The span at 22–41 (SENHEALSGPEKHPQDKDGA) shows a compositional bias: basic and acidic residues. Over residues 43-54 (ADGAAGEQEPGD) the composition is skewed to low complexity. A compositionally biased stretch (pro residues) spans 68–80 (CPPPEASSSPPGP). The residue at position 103 (S103) is a Phosphoserine. Catalysis depends on C137, which acts as the Nucleophile. H319 functions as the Proton acceptor in the catalytic mechanism. A ubiquitin-binding domain (UBD) region spans residues 388-427 (QVDQDYLIALSLQQQQQPQGTLGLSDLELAQQLQQEEYQQ). Low complexity predominate over residues 423–432 (EEYQQQQAVQ). A disordered region spans residues 423–468 (EEYQQQQAVQPVRTRAPSPQGRGATSGRPAGERRQRSKTESDCVLL). S440 carries the phosphoserine modification. Residues 452–468 (AGERRQRSKTESDCVLL) are compositionally biased toward basic and acidic residues.

This sequence belongs to the MINDY deubiquitinase family. FAM63 subfamily.

The catalysed reaction is Thiol-dependent hydrolysis of ester, thioester, amide, peptide and isopeptide bonds formed by the C-terminal Gly of ubiquitin (a 76-residue protein attached to proteins as an intracellular targeting signal).. Functionally, hydrolase that can specifically remove 'Lys-48'-linked conjugated ubiquitin from proteins. Has exodeubiquitinase activity and has a preference for long polyubiquitin chains. May play a regulatory role at the level of protein turnover. This Mus musculus (Mouse) protein is Ubiquitin carboxyl-terminal hydrolase MINDY-1 (Mindy1).